A 576-amino-acid chain; its full sequence is MAGUK p55 subfamily member 7 (576 aa).

L27 domains follow at residues 10 to 65 (SDTG…KQSP) and 67 to 122 (PILH…YDPV). A PDZ domain is found at 139-220 (IIRLVKNREP…AITFKIIPGS (82 aa)). The 71-residue stretch at 228–298 (EGKMFIKALF…PSKHFQERRL (71 aa)) folds into the SH3 domain. The interval 289–383 (PSKHFQERRL…VGPVGVGLNE (95 aa)) is phospho-regulated basic and hydrophobic (PRBH) motif. The region spanning 368–560 (YRLVVLVGPV…AFNELKTTFD (193 aa)) is the Guanylate kinase-like domain. Phosphoserine is present on S409.

This sequence belongs to the MAGUK family. In terms of assembly, heterodimer; able to heterodimerize via its C-terminal L27 domain with LIN7A, LIN7B and LIN7C. Forms a tripartite complex composed of DLG1, MPP7 and LIN7 (LIN7A or LIN7C). Interacts with DLG1 via its N-terminal L27 domain. Interacts with PALS1 and PATJ. Post-translationally, phosphorylated by aPKC which promotes dissociation from the cell cortex.

Its subcellular location is the membrane. The protein localises to the lateral cell membrane. The protein resides in the cell junction. It is found in the tight junction. It localises to the adherens junction. Its subcellular location is the cytoplasm. The protein localises to the cell cortex. In terms of biological role, acts as an important adapter that promotes epithelial cell polarity and tight junction formation via its interaction with DLG1. Involved in the assembly of protein complexes at sites of cell-cell contact. The polypeptide is MAGUK p55 subfamily member 7 (MPP7) (Homo sapiens (Human)).